The chain runs to 521 residues: 2-isopropylmalate synthase (521 aa).

In terms of domain architecture, Pyruvate carboxyltransferase spans 12 to 274 (VIIFDTTLRD…WNKIDTTMLT (263 aa)). Residues Asp-21, His-209, His-211, and Asn-245 each coordinate Mn(2+). Positions 398–521 (KLVSLTVIAG…DMAAPAAAAS (124 aa)) are regulatory domain.

This sequence belongs to the alpha-IPM synthase/homocitrate synthase family. LeuA type 1 subfamily. In terms of assembly, homodimer. Mn(2+) is required as a cofactor.

It is found in the cytoplasm. It catalyses the reaction 3-methyl-2-oxobutanoate + acetyl-CoA + H2O = (2S)-2-isopropylmalate + CoA + H(+). Its pathway is amino-acid biosynthesis; L-leucine biosynthesis; L-leucine from 3-methyl-2-oxobutanoate: step 1/4. Its function is as follows. Catalyzes the condensation of the acetyl group of acetyl-CoA with 3-methyl-2-oxobutanoate (2-ketoisovalerate) to form 3-carboxy-3-hydroxy-4-methylpentanoate (2-isopropylmalate). This chain is 2-isopropylmalate synthase, found in Rhodopseudomonas palustris (strain BisA53).